The sequence spans 126 residues: Protein ApaG (126 aa).

An ApaG domain is found at 2-126 (SALDNSIRVE…FRLATPGLLH (125 aa)).

This is Protein ApaG from Shewanella oneidensis (strain ATCC 700550 / JCM 31522 / CIP 106686 / LMG 19005 / NCIMB 14063 / MR-1).